We begin with the raw amino-acid sequence, 165 residues long: Thiol peroxidase (165 aa).

The region spanning 18–165 is the Thioredoxin domain; the sequence is PQVGDVVTDF…PNYDAALAVL (148 aa). Cysteine 60 acts as the Cysteine sulfenic acid (-SOH) intermediate in catalysis. Cysteines 60 and 94 form a disulfide.

It belongs to the peroxiredoxin family. Tpx subfamily. In terms of assembly, homodimer.

The enzyme catalyses a hydroperoxide + [thioredoxin]-dithiol = an alcohol + [thioredoxin]-disulfide + H2O. Functionally, thiol-specific peroxidase that catalyzes the reduction of hydrogen peroxide and organic hydroperoxides to water and alcohols, respectively. Plays a role in cell protection against oxidative stress by detoxifying peroxides. The polypeptide is Thiol peroxidase (Pasteurella multocida (strain Pm70)).